Reading from the N-terminus, the 205-residue chain is Probable thymidylate kinase (205 aa).

7-14 (GIDGSGKS) contacts ATP.

Belongs to the thymidylate kinase family.

It carries out the reaction dTMP + ATP = dTDP + ADP. The chain is Probable thymidylate kinase from Methanoculleus marisnigri (strain ATCC 35101 / DSM 1498 / JR1).